The following is a 2377-amino-acid chain: DNA (cytosine-5-)-methyltransferase DMT5 (2377 aa).

Residues 24–56 (GTADGAVNGGNIPNSQSQKRKRASPSPEIESEE) form a disordered region. One can recognise a Chromo; shadow subtype domain in the interval 62-126 (YEIDYIADSR…KNPGKPRLSP (65 aa)). Residues 150 to 282 (GKSRAASSTD…KSSLPKAKLR (133 aa)) are disordered. The segment covering 201 to 213 (PTSKKVHPNKKCK) has biased composition (basic residues). Composition is skewed to acidic residues over residues 217 to 238 (DDESDFVFEEGEWDEDEDDDND) and 245 to 263 (EDDEDDEQERSAEEPESDE). Residues 268–282 (PAKKTKSSLPKAKLR) are compositionally biased toward basic residues. The SAM-dependent MTase C5-type domain maps to 347 to 753 (LRVATMCSGT…IAALKVACHK (407 aa)). Cysteine 440 is an active-site residue. Positions 1450 to 1771 (AERPVMVRGG…RSIATFMGIH (322 aa)) constitute a Helicase ATP-binding domain. 1463–1470 (DQVGYGKT) is a binding site for ATP. Disordered stretches follow at residues 1642–1680 (KGQAYRDKHDSDSKAKPITKEELERWEASEDEDDDENSK), 2313–2334 (KGRGSSISMTNEKRTPTLTVKS), and 2347–2377 (SSFRSKKRSMEARDAEGVSDDDENSELSDII). Over residues 1645–1669 (AYRDKHDSDSKAKPITKEELERWEA) the composition is skewed to basic and acidic residues. A Helicase C-terminal domain is found at 2152-2315 (KLEHLVNLIH…EIPQEEYKGR (164 aa)). A compositionally biased stretch (polar residues) spans 2317 to 2334 (SSISMTNEKRTPTLTVKS). The span at 2363–2377 (GVSDDDENSELSDII) shows a compositional bias: acidic residues.

This sequence in the N-terminal section; belongs to the class I-like SAM-binding methyltransferase superfamily. C5-methyltransferase family. The protein in the C-terminal section; belongs to the SNF2/RAD54 helicase family. As to quaternary structure, interacts with SWI6. Mg(2+) is required as a cofactor.

It localises to the nucleus. Its subcellular location is the chromosome. It catalyses the reaction a 2'-deoxycytidine in DNA + S-adenosyl-L-methionine + ATP + H2O = a 5-methyl-2'-deoxycytidine in DNA + S-adenosyl-L-homocysteine + ADP + phosphate + 2 H(+). Its activity is regulated as follows. Hemimethylated DNA substrates stimulate ATP hydrolysis and this is a prerequisite for methyltransferase activity. In terms of biological role, ATP-dependent cytosine methylase that maintains DNA methylation by acting at hemimethylated palindromic 5'-CG-3' sites to produce symmetrically methylated DNA strands. DNA methylation may play a role in transcriptional silencing, particularly at transposable elements. This Cryptococcus neoformans var. grubii serotype A (strain H99 / ATCC 208821 / CBS 10515 / FGSC 9487) (Filobasidiella neoformans var. grubii) protein is DNA (cytosine-5-)-methyltransferase DMT5.